A 431-amino-acid chain; its full sequence is Serine--tRNA ligase (431 aa).

Position 237-239 (237-239 (TAE)) interacts with L-serine. ATP is bound at residue 268 to 270 (RSE). L-serine is bound at residue glutamate 291. 355-358 (EISS) contacts ATP. Position 390 (serine 390) interacts with L-serine.

It belongs to the class-II aminoacyl-tRNA synthetase family. Type-1 seryl-tRNA synthetase subfamily. As to quaternary structure, homodimer. The tRNA molecule binds across the dimer.

The protein localises to the cytoplasm. The catalysed reaction is tRNA(Ser) + L-serine + ATP = L-seryl-tRNA(Ser) + AMP + diphosphate + H(+). The enzyme catalyses tRNA(Sec) + L-serine + ATP = L-seryl-tRNA(Sec) + AMP + diphosphate + H(+). Its pathway is aminoacyl-tRNA biosynthesis; selenocysteinyl-tRNA(Sec) biosynthesis; L-seryl-tRNA(Sec) from L-serine and tRNA(Sec): step 1/1. Catalyzes the attachment of serine to tRNA(Ser). Is also able to aminoacylate tRNA(Sec) with serine, to form the misacylated tRNA L-seryl-tRNA(Sec), which will be further converted into selenocysteinyl-tRNA(Sec). The polypeptide is Serine--tRNA ligase (Neisseria gonorrhoeae (strain ATCC 700825 / FA 1090)).